The primary structure comprises 244 residues: tRNA pseudouridine synthase A (244 aa).

The active-site Nucleophile is D52. Y110 is a binding site for substrate.

This sequence belongs to the tRNA pseudouridine synthase TruA family. In terms of assembly, homodimer.

The enzyme catalyses uridine(38/39/40) in tRNA = pseudouridine(38/39/40) in tRNA. Functionally, formation of pseudouridine at positions 38, 39 and 40 in the anticodon stem and loop of transfer RNAs. The polypeptide is tRNA pseudouridine synthase A (Geobacter sulfurreducens (strain ATCC 51573 / DSM 12127 / PCA)).